Here is a 574-residue protein sequence, read N- to C-terminus: Developmental and secondary metabolism regulator veA (574 aa).

Disordered regions lie at residues M1 to T22, E39 to P60, R255 to K500, and R513 to F548. The region spanning G25–R230 is the Velvet domain. The short motif at E39–C44 is the Nuclear localization signal element. 2 stretches are compositionally biased toward pro residues: residues R314–A323 and P330–H341. 4 stretches are compositionally biased toward polar residues: residues P343–P359, H385–E394, Y402–P415, and V448–T458. The segment at Q457–K501 is PEST. Low complexity-rich tracts occupy residues P459–S474 and S482–S493. Composition is skewed to basic and acidic residues over residues R513 to P525 and P532 to D543.

The protein belongs to the velvet family. VeA subfamily. In terms of assembly, component of the heterotrimeric velvet complex composed of laeA, veA and velB; VeA acting as a bridging protein between laeA and velB.

It is found in the nucleus. It localises to the cytoplasm. Functionally, component of the velvet transcription factor complex that controls sexual/asexual developmental ratio in response to light, promoting sexual development in the darkness while stimulating asexual sporulation under illumination. The velvet complex hat acts as a global regulator for secondary metabolite gene expression. Controls the expression of the aflatoxin gene cluster. Required for the expression of aflR and aflJ. Mediates the coordination of aflatoxigenic vesicles (aflatoxisomes) development with aflatoxin gene expression. Regulates branched chain amino acid and ethanol metabolism and acts as a positive regulator of mitochondrial and peroxisomal beta-oxidation. This chain is Developmental and secondary metabolism regulator veA, found in Aspergillus parasiticus.